We begin with the raw amino-acid sequence, 472 residues long: Coenzyme F(430) synthetase (472 aa).

119-125 (GVKAKTS) lines the ATP pocket.

It belongs to the MurCDEF family.

It catalyses the reaction 15,17(3)-seco-F430-17(3)-acid + ATP = coenzyme F430 + ADP + phosphate. In terms of biological role, involved in the biosynthesis of the unique nickel-containing tetrapyrrole coenzyme F430, the prosthetic group of methyl-coenzyme M reductase (MCR), which plays a key role in methanogenesis and anaerobic methane oxidation. Catalyzes the activation the g-propionate side chain of 15,17(3)-seco-F430-17(3)-acid (seco-F430) for intramolecular C-C bond formation to yield the carbocyclic F ring of coenzyme F430. In Methanosarcina acetivorans (strain ATCC 35395 / DSM 2834 / JCM 12185 / C2A), this protein is Coenzyme F(430) synthetase.